The following is a 141-amino-acid chain: Large ribosomal subunit protein uL11 (141 aa).

The protein belongs to the universal ribosomal protein uL11 family. As to quaternary structure, part of the ribosomal stalk of the 50S ribosomal subunit. Interacts with L10 and the large rRNA to form the base of the stalk. L10 forms an elongated spine to which L12 dimers bind in a sequential fashion forming a multimeric L10(L12)X complex. In terms of processing, one or more lysine residues are methylated.

Functionally, forms part of the ribosomal stalk which helps the ribosome interact with GTP-bound translation factors. This chain is Large ribosomal subunit protein uL11, found in Amoebophilus asiaticus (strain 5a2).